The chain runs to 540 residues: Intestinal-type alkaline phosphatase 1 (540 aa).

The signal sequence occupies residues 1–20; sequence MQGDWVLLLLLGLRIHLSFG. D62 serves as a coordination point for Mg(2+). Residues D62 and S112 each coordinate Zn(2+). S112 (phosphoserine intermediate) is an active-site residue. Residues C141 and C203 are joined by a disulfide bond. N142 carries an N-linked (GlcNAc...) asparagine glycan. Mg(2+) is bound at residue S175. Ca(2+) is bound by residues E236, F289, and E290. N301 carries N-linked (GlcNAc...) asparagine glycosylation. D305 contacts Ca(2+). E331 provides a ligand contact to Mg(2+). Residues D336, H340, D377, and H378 each coordinate Zn(2+). N428 carries N-linked (GlcNAc...) asparagine glycosylation. H452 provides a ligand contact to Zn(2+). The cysteines at positions 487 and 494 are disulfide-linked. N511 carries the GPI-anchor amidated asparagine lipid modification. Residues 512–540 constitute a propeptide, removed in mature form; the sequence is SAITMNNVLLSLQLLVSMLLLVGTALVVS.

The protein belongs to the alkaline phosphatase family. In terms of assembly, homodimer. Mg(2+) serves as cofactor. Requires Zn(2+) as cofactor. It depends on Ca(2+) as a cofactor.

The protein localises to the cell membrane. The enzyme catalyses a phosphate monoester + H2O = an alcohol + phosphate. In terms of biological role, alkaline phosphatase that can hydrolyze various phosphate compounds. This Rattus norvegicus (Rat) protein is Intestinal-type alkaline phosphatase 1 (Alpi).